The primary structure comprises 218 residues: MEVEEAAYRTVWSEPPKRPAGRTKFRETRHPVYRGVRRRGGRPGAAGRWVCEVRVPGARGSRLWLGTFATAEAAARAHDAAALALRGRAACLNFADSAWRMPPVPASAALAGARGVRDAVAVAVEAFQRQSAAPSSPAETFADDGDEEEDNKDVLPVAAAEVFDAGAFELDDGFRFGGMDAGSYYASLAQGLLVEPPAAGAWWEDGELAGSDMPLWSY.

Residues 1–26 are disordered; it reads MEVEEAAYRTVWSEPPKRPAGRTKFR. A DNA-binding region (AP2/ERF) is located at residues 32 to 95; that stretch reads VYRGVRRRGG…RGRAACLNFA (64 aa). Residues 131-151 are disordered; it reads SAAPSSPAETFADDGDEEEDN. The segment covering 141–151 has biased composition (acidic residues); it reads FADDGDEEEDN.

This sequence belongs to the AP2/ERF transcription factor family. ERF subfamily.

It localises to the nucleus. Its function is as follows. Transcriptional activator that binds specifically to the DNA sequence 5'-[AG]CCGAC-3'. Binding to the C-repeat/DRE element mediates high salinity- and dehydration-inducible transcription. Confers resistance to high salt, cold and drought stress. The protein is Dehydration-responsive element-binding protein 1B (DREB1B) of Oryza sativa subsp. indica (Rice).